A 231-amino-acid polypeptide reads, in one-letter code: 7-cyano-7-deazaguanine synthase (231 aa).

ATP is bound at residue 8–18 (FSGGQDSTTCL). Positions 188, 197, 200, and 203 each coordinate Zn(2+).

It belongs to the QueC family. It depends on Zn(2+) as a cofactor.

It carries out the reaction 7-carboxy-7-deazaguanine + NH4(+) + ATP = 7-cyano-7-deazaguanine + ADP + phosphate + H2O + H(+). The protein operates within purine metabolism; 7-cyano-7-deazaguanine biosynthesis. Its function is as follows. Catalyzes the ATP-dependent conversion of 7-carboxy-7-deazaguanine (CDG) to 7-cyano-7-deazaguanine (preQ(0)). This chain is 7-cyano-7-deazaguanine synthase, found in Escherichia coli O127:H6 (strain E2348/69 / EPEC).